The following is a 244-amino-acid chain: Futalosine hydrolase (244 aa).

This sequence belongs to the PNP/UDP phosphorylase family. Futalosine hydrolase subfamily.

It carries out the reaction futalosine + H2O = dehypoxanthine futalosine + hypoxanthine. It participates in quinol/quinone metabolism; menaquinone biosynthesis. Its function is as follows. Catalyzes the hydrolysis of futalosine (FL) to dehypoxanthine futalosine (DHFL) and hypoxanthine, a step in the biosynthesis of menaquinone (MK, vitamin K2). Cannot directly use aminodeoxyfutalosine (AFL) as a substrate. The polypeptide is Futalosine hydrolase (Acidothermus cellulolyticus (strain ATCC 43068 / DSM 8971 / 11B)).